A 467-amino-acid chain; its full sequence is ADP-dependent glucose/glucosamine kinase (467 aa).

In terms of domain architecture, ADPK spans 10–467; the sequence is RLWKRLYVNA…FVSEFGMRKR (458 aa). D-glucose-binding positions include aspartate 42, glutamate 96, glycine 120, 120–121, histidine 184, and aspartate 211; that span reads GQ. Glutamate 279 lines the Mg(2+) pocket. Asparagine 305 serves as a coordination point for ADP. Glutamate 308 contributes to the Mg(2+) binding site. ADP is bound by residues 352–353, valine 440, and glycine 450; that span reads HT. Aspartate 451 lines the D-glucose pocket. Aspartate 451 is a Mg(2+) binding site. The active-site Proton acceptor is aspartate 451.

This sequence belongs to the ADP-dependent glucokinase family. As to quaternary structure, monomer. The cofactor is Mg(2+).

The protein localises to the cytoplasm. The catalysed reaction is D-glucose + ADP = D-glucose 6-phosphate + AMP + H(+). It catalyses the reaction D-glucosamine + ADP = D-glucosamine 6-phosphate + AMP + H(+). It participates in carbohydrate degradation; glycolysis. Its function is as follows. Catalyzes the ADP-dependent phosphorylation of D-glucose to D-glucose 6-phosphate and glucosamine to glucosamine 6-phosphate. Can also use CDP as the phosphoryl group donor and D-1,5-anhydroglucitol as the phosphoryl group acceptor. The sequence is that of ADP-dependent glucose/glucosamine kinase from Thermococcus litoralis (strain ATCC 51850 / DSM 5473 / JCM 8560 / NS-C).